Here is a 108-residue protein sequence, read N- to C-terminus: Nucleoid-associated protein BPP1222 (108 aa).

The interval Thr86–Phe108 is disordered. The segment covering Pro99 to Phe108 has biased composition (pro residues).

It belongs to the YbaB/EbfC family. In terms of assembly, homodimer.

The protein resides in the cytoplasm. The protein localises to the nucleoid. Functionally, binds to DNA and alters its conformation. May be involved in regulation of gene expression, nucleoid organization and DNA protection. The chain is Nucleoid-associated protein BPP1222 from Bordetella parapertussis (strain 12822 / ATCC BAA-587 / NCTC 13253).